The sequence spans 74 residues: Protein krueppel (74 aa).

C2H2-type zinc fingers lie at residues 1–4, 10–32, 38–60, and 66–74; these read ERTH, FECPECHKRFTRDHHLKTHMRLH, YHCSHCDRQFVQVANLRRHLRVH, and YACELCDAR.

It belongs to the krueppel C2H2-type zinc-finger protein family.

It localises to the nucleus. In terms of biological role, krueppel is a gap class segmentation protein. The sequence is that of Protein krueppel (Kr) from Psychoda cinerea (Psychod fly).